A 138-amino-acid chain; its full sequence is uncharacterized protein (138 aa).

The segment at residues 17–38 (LCRNDVAHEAGTNNVQIMRIEK) is a DNA-binding region (H-T-H motif).

This is an uncharacterized protein from Herpetosiphon aurantiacus (Herpetosiphon giganteus).